The primary structure comprises 134 residues: Profilin-4 (134 aa).

C13 and C118 are joined by a disulfide. The Involved in PIP2 interaction signature appears at 84-100 (AVIRGKKGSGGITIKKT). Residue T114 is modified to Phosphothreonine.

This sequence belongs to the profilin family. Occurs in many kinds of cells as a complex with monomeric actin in a 1:1 ratio. Post-translationally, phosphorylated by MAP kinases.

Its subcellular location is the cytoplasm. It is found in the cytoskeleton. Its function is as follows. Binds to actin and affects the structure of the cytoskeleton. At high concentrations, profilin prevents the polymerization of actin, whereas it enhances it at low concentrations. The chain is Profilin-4 from Olea europaea (Common olive).